Consider the following 115-residue polypeptide: Large ribosomal subunit protein uL22 (115 aa).

It belongs to the universal ribosomal protein uL22 family. In terms of assembly, part of the 50S ribosomal subunit.

Its function is as follows. This protein binds specifically to 23S rRNA; its binding is stimulated by other ribosomal proteins, e.g. L4, L17, and L20. It is important during the early stages of 50S assembly. It makes multiple contacts with different domains of the 23S rRNA in the assembled 50S subunit and ribosome. Functionally, the globular domain of the protein is located near the polypeptide exit tunnel on the outside of the subunit, while an extended beta-hairpin is found that lines the wall of the exit tunnel in the center of the 70S ribosome. The polypeptide is Large ribosomal subunit protein uL22 (Lactiplantibacillus plantarum (strain ATCC BAA-793 / NCIMB 8826 / WCFS1) (Lactobacillus plantarum)).